We begin with the raw amino-acid sequence, 406 residues long: MIPGIFLSLPDLRCSLLLLVTWVFTPVTAEIISLDTENIDDILNNADVALVNFYADWCRFSQMLHPIFEEASNVIKEEYPNANQVVFARVDCDQHSDIAQRYRISKYPTLKLFRNGMMMKREYRGQRSVKALADYIRQQKSDPIQELHDLAEITTPDRSKRNIIGYFEQKDSENYRVFERVANILHDDCAFLAAFGVVSKPERYSGDNIVYKPPGHSAPDMVYLGSMTNFDGTYNWIQDKCVPLVREITFENGEELTEEGLPFLILFHMKEDTESLEIFQNEVARQLISEKGTINFLHADCDKFRHPLLHIQKTPADCPVIAIDSFRHMYVFGDFRDVLIPGKLKQFVFDLHSGKLHREFHHGPDPTDTAPGEEVQDVASSPPESSFQKLAPSEYRYTLLRDRDEL.

Residues 1–29 (MIPGIFLSLPDLRCSLLLLVTWVFTPVTA) form the signal peptide. Positions 30 to 138 (EIISLDTENI…VKALADYIRQ (109 aa)) constitute a Thioredoxin domain. Disulfide bonds link Cys189-Cys241 and Cys301-Cys318. Residues 236-285 (WIQDKCVPLVREITFENGEELTEEGLPFLILFHMKEDTESLEIFQNEVAR) form an interaction with ITPR1 region. A disordered region spans residues 360-387 (FHHGPDPTDTAPGEEVQDVASSPPESSF). Residues 378–387 (VASSPPESSF) show a composition bias toward polar residues. The Prevents secretion from ER motif lies at 403 to 406 (RDEL).

In terms of assembly, forms mixed disulfides with both ERO1A and ERO1B and cargo folding intermediates; the interactions with ERO1A and ERO1B result in their retention in the endoplasmic reticulum. Directly interacts with ITPR1 in a pH-, redox state- and calcium-dependent manner, but not with ITPR2 or ITPR3. The strength of this interaction inversely correlates with calcium concentration.

The protein resides in the endoplasmic reticulum lumen. Its function is as follows. Mediates thiol-dependent retention in the early secretory pathway, forming mixed disulfides with substrate proteins through its conserved CRFS motif. Inhibits the calcium channel activity of ITPR1. May have a role in the control of oxidative protein folding in the endoplasmic reticulum. Required to retain ERO1A and ERO1B in the endoplasmic reticulum. The sequence is that of Endoplasmic reticulum resident protein 44 (ERP44) from Bos taurus (Bovine).